The following is a 524-amino-acid chain: GMP synthase [glutamine-hydrolyzing] (524 aa).

In terms of domain architecture, Glutamine amidotransferase type-1 spans 9 to 207 (RILILDFSSQ…VIHICQCIPN (199 aa)). C86 (nucleophile) is an active-site residue. Active-site residues include H181 and E183. One can recognise a GMPS ATP-PPase domain in the interval 208–399 (WTTKHIIEDS…LGLPADLIYR (192 aa)). 235 to 241 (SGGVDSA) contributes to the ATP binding site.

In terms of assembly, homodimer.

The enzyme catalyses XMP + L-glutamine + ATP + H2O = GMP + L-glutamate + AMP + diphosphate + 2 H(+). It functions in the pathway purine metabolism; GMP biosynthesis; GMP from XMP (L-Gln route): step 1/1. Its function is as follows. Catalyzes the synthesis of GMP from XMP. This chain is GMP synthase [glutamine-hydrolyzing], found in Coxiella burnetii (strain Dugway 5J108-111).